Here is a 910-residue protein sequence, read N- to C-terminus: Auxilin (910 aa).

3 consecutive repeat copies span residues 33–36, 37–40, and 41–44. The tract at residues 33–44 is 3 X 4 AA approximate tandem repeats; that stretch reads NLKDNLKDTLKD. Positions 52 to 219 constitute a Phosphatase tensin-type domain; the sequence is SVTSYTKGDL…GYMCDLLADK (168 aa). Serine 109 is modified (phosphoserine). Catalysis depends on cysteine 161, which acts as the Phosphocysteine intermediate. Residues 225–363 form the C2 tensin-type domain; that stretch reads FKPLTIKSIT…FQVTLDVELQ (139 aa). An SH3-binding motif is present at residues 406–414; the sequence is PIDIPPDNP. Residues 448–772 are disordered; sequence QESEQSDDEL…RGKAAANLEG (325 aa). Serine 450, serine 453, serine 560, and serine 567 each carry phosphoserine. Residues 547 to 569 show a composition bias toward low complexity; sequence PSGPTSTQSTPRRSATSTSASPT. The span at 596 to 626 shows a compositional bias: polar residues; sequence FLNTASASSDPFLQPTRSPSPTVHASSTPAV. The segment covering 651–666 has biased composition (low complexity); that stretch reads SAATSPTGSSHGTPTH. Residues 715-725 are compositionally biased toward gly residues; it reads MGGGWQQGGGY. Residues 732 to 758 are compositionally biased toward polar residues; the sequence is SKPQSSMPHSSPQNRPNYNVSFSSMPG. One can recognise a J domain in the interval 846-910; that stretch reads TKWKPVGMAD…FENQGQKPLY (65 aa).

Forms a complex composed of HSPA8, CLTC and DNAJC6. Interacts with HSPA8/HSC70 in an ATP-dependent manner; this interaction stimulates the HSPA8's ATPase activity. Interacts with CLTC; this interaction produces a local change in heavy-chain contacts, creating a detectable global distortion of the clathrin coat. Interacts with AP2A2. Interacts with DNM1(GTP-bound form); this interaction allows clathrin-coated vesicle (CCV) formation at the plasma membrane. In terms of processing, the N-terminus is blocked. Post-translationally, phosphorylation at Ser-567 modulates its ability to bind CLTC and therefore the synaptic vesicle endocytosis (SVE). In terms of tissue distribution, brain.

It localises to the cytoplasmic vesicle. The protein localises to the clathrin-coated vesicle. May act as a protein phosphatase and/or a lipid phosphatase. Co-chaperone that recruits HSPA8/HSC70 to clathrin-coated vesicles (CCVs) and promotes the ATP-dependent dissociation of clathrin from CCVs and participates in clathrin-mediated endocytosis of synaptic vesicles and their recycling and also in intracellular trafficking. Firstly, binds tightly to the clathrin cages, at a ratio of one DNAJC6 per clathrin triskelion. The HSPA8:ATP complex then binds to the clathrin-auxilin cage, initially at a ratio of one HSPA8 per triskelion leading to ATP hydrolysis stimulation and causing a conformational change in the HSPA8. This cycle is repeated three times to drive to a complex containing the clathrin-auxilin cage associated to three HSPA8:ADP complex. The ATP hydrolysis of the third HSPA8:ATP complex leads to a concerted dismantling of the cage into component triskelia. Then, dissociates from the released triskelia and be recycled to initiate another cycle of HSPA8's recruitment. Also acts during the early steps of clathrin-coated vesicle (CCV) formation through its interaction with the GTP bound form of DNM1. This is Auxilin from Bos taurus (Bovine).